We begin with the raw amino-acid sequence, 181 residues long: Putative NAD(P)H-dependent FMN-containing oxidoreductase YwqN (181 aa).

This sequence belongs to the SsuE family. Requires FMN as cofactor.

Functionally, putative NADPH-dependent oxidoreductase. The polypeptide is Putative NAD(P)H-dependent FMN-containing oxidoreductase YwqN (ywqN) (Bacillus subtilis (strain 168)).